The primary structure comprises 39 residues: Photosystem II reaction center protein X (39 aa).

Residues 10 to 30 form a helical membrane-spanning segment; it reads WSLVLGAAIVLIPATIGLIFI.

This sequence belongs to the PsbX family. Type 1 subfamily. PSII is composed of 1 copy each of membrane proteins PsbA, PsbB, PsbC, PsbD, PsbE, PsbF, PsbH, PsbI, PsbJ, PsbK, PsbL, PsbM, PsbT, PsbX, PsbY, PsbZ, Psb30/Ycf12, peripheral proteins PsbO, CyanoQ (PsbQ), PsbU, PsbV and a large number of cofactors. It forms dimeric complexes.

Its subcellular location is the cellular thylakoid membrane. Functionally, involved in the binding and/or turnover of quinones at the Q(B) site of photosystem II (PSII). PSII is a light-driven water plastoquinone oxidoreductase, using light energy to abstract electrons from H(2)O, generating a proton gradient subsequently used for ATP formation. This chain is Photosystem II reaction center protein X, found in Microcystis aeruginosa (strain NIES-843 / IAM M-2473).